Here is a 296-residue protein sequence, read N- to C-terminus: 4-hydroxy-tetrahydrodipicolinate synthase (296 aa).

T49 contacts pyruvate. Residue Y137 is the Proton donor/acceptor of the active site. K165 (schiff-base intermediate with substrate) is an active-site residue. I207 lines the pyruvate pocket.

The protein belongs to the DapA family. As to quaternary structure, homotetramer; dimer of dimers.

It is found in the cytoplasm. The catalysed reaction is L-aspartate 4-semialdehyde + pyruvate = (2S,4S)-4-hydroxy-2,3,4,5-tetrahydrodipicolinate + H2O + H(+). The protein operates within amino-acid biosynthesis; L-lysine biosynthesis via DAP pathway; (S)-tetrahydrodipicolinate from L-aspartate: step 3/4. Catalyzes the condensation of (S)-aspartate-beta-semialdehyde [(S)-ASA] and pyruvate to 4-hydroxy-tetrahydrodipicolinate (HTPA). The chain is 4-hydroxy-tetrahydrodipicolinate synthase from Afipia carboxidovorans (strain ATCC 49405 / DSM 1227 / KCTC 32145 / OM5) (Oligotropha carboxidovorans).